The sequence spans 271 residues: MIRFLILAGYFELGMYLQLSGKLDRYINSHYSYLAYISMALSFILALVQLTIWMKRLKMHSHLSGKAAKFFSPIILAIPVFIGLLVPTVPLDSTTVSAKGYHFPLAAGSTTSGTSSDGTRVQYLKPDTSLYFTKSAYQKEMRATLKKYKGSGKLQITTQNYMEVMEIIYLFPDEFKNRQIEYVGFIYNDPKDKNSQFLFRFGIIHCIADSGVYGLLTTGGQTHYQNNTWVTVSGKLAIEYNQNLKQTLPVLHISQSSQTMQPKNPYVYRVF.

A run of 2 helical transmembrane segments spans residues 34-54 (LAYISMALSFILALVQLTIWM) and 70-90 (FFSPIILAIPVFIGLLVPTVP).

Belongs to the UPF0703 family. In terms of assembly, interacts with SMU_747c.

The protein resides in the cell membrane. Functionally, could be part of a two-component membrane permease system responsible for amino acid transport under low pH. Involved in acidogenesis, biofilm formation and low-pH survival. This chain is Putative two-component membrane permease complex subunit SMU_746c, found in Streptococcus mutans serotype c (strain ATCC 700610 / UA159).